A 248-amino-acid chain; its full sequence is Type III pantothenate kinase (248 aa).

An ATP-binding site is contributed by 8-15 (DAGNTRTK). Substrate-binding positions include tyrosine 87 and 94 to 97 (GVDR). Aspartate 96 acts as the Proton acceptor in catalysis. Threonine 119 contributes to the ATP binding site. Residue threonine 173 participates in substrate binding.

The protein belongs to the type III pantothenate kinase family. In terms of assembly, homodimer. NH4(+) is required as a cofactor. K(+) serves as cofactor.

The protein resides in the cytoplasm. The enzyme catalyses (R)-pantothenate + ATP = (R)-4'-phosphopantothenate + ADP + H(+). It participates in cofactor biosynthesis; coenzyme A biosynthesis; CoA from (R)-pantothenate: step 1/5. Functionally, catalyzes the phosphorylation of pantothenate (Pan), the first step in CoA biosynthesis. The protein is Type III pantothenate kinase of Methylobacillus flagellatus (strain ATCC 51484 / DSM 6875 / VKM B-1610 / KT).